We begin with the raw amino-acid sequence, 357 residues long: Neutral protease 2 homolog UREG_02006 (357 aa).

Positions 1-19 (MLFSSRFLALAALLGQALA) are cleaved as a signal peptide. Positions 20–179 (LPIDDFSQSD…QSAVPTIEKR (160 aa)) are excised as a propeptide. Cystine bridges form between cysteine 187–cysteine 259 and cysteine 266–cysteine 284. Histidine 308 provides a ligand contact to Zn(2+). Glutamate 309 is an active-site residue. Residues histidine 312 and aspartate 323 each coordinate Zn(2+).

The protein belongs to the peptidase M35 family. It depends on Zn(2+) as a cofactor.

It localises to the secreted. The enzyme catalyses Preferential cleavage of bonds with hydrophobic residues in P1'. Also 3-Asn-|-Gln-4 and 8-Gly-|-Ser-9 bonds in insulin B chain.. Secreted metalloproteinase that allows assimilation of proteinaceous substrates. Shows high activities on basic nuclear substrates such as histone and protamine. The chain is Neutral protease 2 homolog UREG_02006 from Uncinocarpus reesii (strain UAMH 1704).